Reading from the N-terminus, the 339-residue chain is Ketol-acid reductoisomerase (NADP(+)) (339 aa).

Residues 1-182 (MRVYYDRDAD…GGGRAGIIET (182 aa)) form the KARI N-terminal Rossmann domain. Residues 24-27 (YGSQ), R48, S51, S53, and 83-86 (DELQ) each bind NADP(+). H108 is an active-site residue. G134 is an NADP(+) binding site. In terms of domain architecture, KARI C-terminal knotted spans 183–328 (TFREECETDL…AKLRDMMPWI (146 aa)). The Mg(2+) site is built by D191, E195, E227, and E231. S252 is a substrate binding site.

It belongs to the ketol-acid reductoisomerase family. Requires Mg(2+) as cofactor.

The enzyme catalyses (2R)-2,3-dihydroxy-3-methylbutanoate + NADP(+) = (2S)-2-acetolactate + NADPH + H(+). The catalysed reaction is (2R,3R)-2,3-dihydroxy-3-methylpentanoate + NADP(+) = (S)-2-ethyl-2-hydroxy-3-oxobutanoate + NADPH + H(+). It participates in amino-acid biosynthesis; L-isoleucine biosynthesis; L-isoleucine from 2-oxobutanoate: step 2/4. Its pathway is amino-acid biosynthesis; L-valine biosynthesis; L-valine from pyruvate: step 2/4. Its function is as follows. Involved in the biosynthesis of branched-chain amino acids (BCAA). Catalyzes an alkyl-migration followed by a ketol-acid reduction of (S)-2-acetolactate (S2AL) to yield (R)-2,3-dihydroxy-isovalerate. In the isomerase reaction, S2AL is rearranged via a Mg-dependent methyl migration to produce 3-hydroxy-3-methyl-2-ketobutyrate (HMKB). In the reductase reaction, this 2-ketoacid undergoes a metal-dependent reduction by NADPH to yield (R)-2,3-dihydroxy-isovalerate. The sequence is that of Ketol-acid reductoisomerase (NADP(+)) from Rhodopseudomonas palustris (strain BisB18).